The chain runs to 921 residues: Respiratory burst oxidase homolog protein D (921 aa).

A disordered region spans residues 1–71 (MKMRRGNSSN…RSNSVAGGRG (71 aa)). Residues 1-376 (MKMRRGNSSN…KYFILDNWQR (376 aa)) lie on the Cytoplasmic side of the membrane. 4 positions are modified to phosphoserine: Ser-8, Ser-9, Ser-26, and Ser-39. Residues 21 to 31 (NSDTNSDTESI) are compositionally biased toward polar residues. Positions 44 to 53 (RPKRASKKNA) are enriched in basic residues. 2 EF-hand-like regions span residues 193–203 (SADSNGLLLSA) and 230–241 (NNVSGDAITKEQ). 2 consecutive EF-hand domains span residues 253–288 (SFDA…SASA) and 297–332 (QAKE…APNQ). The Ca(2+) site is built by Asp-266, Asp-268, Asp-270, Arg-272, and Glu-277. Phosphoserine occurs at positions 339, 343, and 347. The chain crosses the membrane as a helical span at residues 377–397 (LWIMMLWLGICGGLFTYKFIQ). Over 398-461 (YKNKAAYGVM…FDDSLNFHKV (64 aa)) the chain is Extracellular. Residues 415–572 (KGGAETLKFN…LFIIVYALLI (158 aa)) form the Ferric oxidoreductase domain. Residues 462-482 (IASGIVVGVLLHAGAHLTCDF) form a helical membrane-spanning segment. The Cytoplasmic portion of the chain corresponds to 483–516 (PRLIAADEDTYEPMEKYFGDQPTSYWWFVKGVEG). The chain crosses the membrane as a helical span at residues 517–537 (WTGIVMVVLMAIAFTLATPWF). Residues 538-559 (RRNKLNLPNFLKKLTGFNAFWY) lie on the Extracellular side of the membrane. Residues 560–580 (THHLFIIVYALLIVHGIKLYL) traverse the membrane as a helical segment. Residues 581–588 (TKIWYQKT) lie on the Cytoplasmic side of the membrane. Residues 589-606 (TWMYLAVPILLYASERLL) form a helical membrane-spanning segment. Over 607 to 734 (RAFRSSIKPV…PYGAPAQDYK (128 aa)) the chain is Extracellular. In terms of domain architecture, FAD-binding FR-type spans 611-732 (SSIKPVKMIK…DGPYGAPAQD (122 aa)). Residues 735-755 (KYDVVLLVGLGIGATPMISIL) traverse the membrane as a helical segment. Over 756-921 (KDIINNMKGP…TKFDFHKENF (166 aa)) the chain is Cytoplasmic.

This sequence belongs to the RBOH (TC 5.B.1.3) family. As to quaternary structure, monomer and homodimer. Interacts with BIK1 and FLS2. Interacts with PBL13. Binds to SIK1 upon flagellin perception and becomes activated by phosphorylation. In terms of processing, phosphorylated at Ser-39, Ser-343 and Ser-347 by BIK1 upon flagellin (flg22) treatment. Activated by phosphorylation at Ser-347 mediated by SIK1 and at Ser-8, Ser-9 and Ser-339 upon flagellin (e.g. flg22) perception. As to expression, more abundant in roots than in leaves, stems or inflorescences. Expressed in mesophyll and guard cells.

Its subcellular location is the membrane. Its activity is regulated as follows. Inhibited by diphenylene iodinium (DPI). In terms of biological role, calcium-dependent NADPH oxidase that generates superoxide. Involved in the generation of reactive oxygen species (ROS) during incompatible interactions with pathogens, in response to pathogen-associated molecular pattern (PAMP)-triggered immunity (PTI) signaling and in UV-B and abscisic acid ROS-dependent signaling and via SIK1 mediated activation by phosphorylation. Might be required for ROS signal amplification during light stress. In Arabidopsis thaliana (Mouse-ear cress), this protein is Respiratory burst oxidase homolog protein D.